The chain runs to 290 residues: Cilia- and flagella-associated protein 298 (290 aa).

This sequence belongs to the CFAP298 family. Interacts with dnaaf1/swt. Interacts with lrrc6/sea. Interacts with dvl (via DEP and PDZ domains). In terms of tissue distribution, strongly expressed in ciliated tissues of the embryonic trunk, including the pronephric ducts and spinal canal.

The protein resides in the cytoplasm. It localises to the cytoskeleton. The protein localises to the cilium basal body. Functionally, plays a role in motile cilium function, possibly by acting on outer dynein arm assembly. Seems to be important for initiation rather than maintenance of cilium motility. Required for correct positioning of cilia at the apical cell surface, suggesting an additional role in the planar cell polarity (PCP) pathway. May suppress canonical Wnt signaling activity. The sequence is that of Cilia- and flagella-associated protein 298 from Danio rerio (Zebrafish).